Consider the following 896-residue polypeptide: Valine--tRNA ligase (896 aa).

The 'HIGH' region signature appears at 48 to 58 (PNVTGSLHMGH). Residues 543 to 547 (KMSKS) carry the 'KMSKS' region motif. Lys-546 is an ATP binding site. Residues 830–896 (VIDLDAERTR…ARLGAALERL (67 aa)) are a coiled coil.

This sequence belongs to the class-I aminoacyl-tRNA synthetase family. ValS type 1 subfamily. Monomer.

It is found in the cytoplasm. It catalyses the reaction tRNA(Val) + L-valine + ATP = L-valyl-tRNA(Val) + AMP + diphosphate. Catalyzes the attachment of valine to tRNA(Val). As ValRS can inadvertently accommodate and process structurally similar amino acids such as threonine, to avoid such errors, it has a 'posttransfer' editing activity that hydrolyzes mischarged Thr-tRNA(Val) in a tRNA-dependent manner. This Granulibacter bethesdensis (strain ATCC BAA-1260 / CGDNIH1) protein is Valine--tRNA ligase.